The chain runs to 370 residues: Forkhead box protein J1.2 (370 aa).

A disordered region spans residues 45-74; that stretch reads ANSRPPVPRVSQGPCSPPAGDTASCQAPRT. A DNA-binding region (fork-head) is located at residues 108-202; the sequence is KPPYSYATLI…VNGVLKRRRM (95 aa). A disordered region spans residues 227–246; sequence PGSHHMQHISGGHRQSRRYE.

It belongs to the FOXJ1 family.

The protein localises to the nucleus. Functionally, key transcription factor required for motile ciliogenesis. Activates genes essential for motile cilia formation and function. This is Forkhead box protein J1.2 from Xenopus laevis (African clawed frog).